The primary structure comprises 90 residues: Antitoxin epsilon (90 aa).

The protein belongs to the epsilon antitoxin family. In terms of assembly, in the presence of the zeta toxin, forms an inactive PezA(2)PezT(2) heterotetramer. The heterotetramer is still able to bind the zeta toxin substrate UNAG.

Its function is as follows. Antitoxin component of a type II toxin-antitoxin (TA) system. Neutralizes the toxic effect of cognate zeta toxin. Part of a postsegregational killing (PSK) system involved in the killing of plasmid-free cells. Continuous synthesis of the epsilon antitoxin is required to counteract the zeta toxin. This Streptococcus pyogenes protein is Antitoxin epsilon.